Here is a 526-residue protein sequence, read N- to C-terminus: Probable feruloyl esterase B-2 (526 aa).

An N-terminal signal peptide occupies residues 1 to 19 (MPSLRRLLPFLAAGSAALA). 2 cysteine pairs are disulfide-bonded: Cys-28–Cys-75 and Cys-63–Cys-114. Residues Asn-53, Asn-85, Asn-98, and Asn-138 are each glycosylated (N-linked (GlcNAc...) asparagine). 3 disulfides stabilise this stretch: Cys-187-Cys-441, Cys-256-Cys-273, and Cys-282-Cys-291. Residue Ser-188 is the Acyl-ester intermediate of the active site. Asn-246 carries an N-linked (GlcNAc...) asparagine glycan. Ca(2+)-binding residues include Asp-257, Asp-260, Ala-262, Asp-264, and Ile-266. N-linked (GlcNAc...) asparagine glycans are attached at residues Asn-287 and Asn-311. Catalysis depends on charge relay system residues Asp-400 and His-440. Residues Asn-490 and Asn-516 are each glycosylated (N-linked (GlcNAc...) asparagine). Cys-503 and Cys-525 are joined by a disulfide.

Belongs to the tannase family.

The protein localises to the secreted. The catalysed reaction is feruloyl-polysaccharide + H2O = ferulate + polysaccharide.. In terms of biological role, involved in degradation of plant cell walls. Hydrolyzes the feruloyl-arabinose ester bond in arabinoxylans as well as the feruloyl-galactose and feruloyl-arabinose ester bonds in pectin. The chain is Probable feruloyl esterase B-2 (faeB-2) from Aspergillus oryzae (strain ATCC 42149 / RIB 40) (Yellow koji mold).